A 172-amino-acid chain; its full sequence is MNQSLTPSAGTDSKTGSSKAISFQDYLDLSTLDWARLRAILAPALYVDYTKIGKEKWDAMSADDFMAMVSNDDFLGDPCVKTQHLIGATYWERVSESKVIGHHQLRAAHQVYTSPDLKTVKLRGHSHATNEHYYVKSSGVWKFAGLKPEVRWNEYKFEEVFKGSYTQSEKHS.

Tyr-49 serves as a coordination point for substrate. Residues His-84 and His-109 contribute to the active site. Asn-130 provides a ligand contact to substrate.

This sequence belongs to the scytalone dehydratase family. As to quaternary structure, homotrimer. Each subunit contains an active site, located in the central part of the hydrophobic core of the monomer, which functions independently.

Scytalone dehydratase-like protein; part of the Pks2 gene cluster that mediates the formation of infectious structures (appressoria), enabling these fungi to kill insects faster. The product of the Pks2 gene cluster is different from the one of Pks1 and has still not been identified. This Metarhizium robertsii (strain ARSEF 23 / ATCC MYA-3075) (Metarhizium anisopliae (strain ARSEF 23)) protein is Scytalone dehydratase-like protein Arp1.